The following is a 189-amino-acid chain: UPF0301 protein RPR_01165 (189 aa).

This sequence belongs to the UPF0301 (AlgH) family.

The protein is UPF0301 protein RPR_01165 of Rickettsia peacockii (strain Rustic).